Here is a 297-residue protein sequence, read N- to C-terminus: Probable endonuclease 4 (297 aa).

The Zn(2+) site is built by histidine 69, histidine 110, glutamate 145, aspartate 179, histidine 182, histidine 214, aspartate 227, histidine 229, and glutamate 259.

This sequence belongs to the AP endonuclease 2 family. Zn(2+) is required as a cofactor.

It catalyses the reaction Endonucleolytic cleavage to 5'-phosphooligonucleotide end-products.. Functionally, endonuclease IV plays a role in DNA repair. It cleaves phosphodiester bonds at apurinic or apyrimidinic (AP) sites, generating a 3'-hydroxyl group and a 5'-terminal sugar phosphate. This is Probable endonuclease 4 from Bacillus licheniformis (strain ATCC 14580 / DSM 13 / JCM 2505 / CCUG 7422 / NBRC 12200 / NCIMB 9375 / NCTC 10341 / NRRL NRS-1264 / Gibson 46).